We begin with the raw amino-acid sequence, 170 residues long: Calcineurin subunit B type 1 (170 aa).

EF-hand domains are found at residues 18–46 (DEIR…FMSL), 50–85 (QQNP…FSVR), 87–122 (DKLS…MVGN), and 128–163 (QLQQ…TDIH). Ca(2+) contacts are provided by Asp-31, Asp-33, Ser-35, Glu-42, Asp-63, Asp-65, Asn-67, Glu-69, Glu-74, Asp-100, Asp-102, Asp-104, Tyr-106, Glu-111, Asp-141, Asp-143, Asp-145, Lys-147, and Glu-152.

This sequence belongs to the calcineurin regulatory subunit family. Composed of two components (A and B), the A component is the catalytic subunit and the B component confers calcium sensitivity.

Its function is as follows. Calcineurin is a calcium-binding and calmodulin-binding protein found in all cells from yeast to mammals, and a calcium-dependent, calmodulin-stimulated protein phosphatase. This Drosophila melanogaster (Fruit fly) protein is Calcineurin subunit B type 1 (CanB).